The following is a 257-amino-acid chain: NAD-capped RNA hydrolase NudC (257 aa).

Positions 25 and 69 each coordinate substrate. Residues C98 and C101 each contribute to the Zn(2+) site. Residue E111 participates in substrate binding. Zn(2+)-binding residues include C116 and C119. Y124 is a binding site for substrate. The 124-residue stretch at P125–T248 folds into the Nudix hydrolase domain. A158, E174, and E178 together coordinate a divalent metal cation. A Nudix box motif is present at residues G159–G180. Residue Q192 to S199 coordinates substrate. E219 contacts a divalent metal cation. A241 contacts substrate.

It belongs to the Nudix hydrolase family. NudC subfamily. In terms of assembly, homodimer. Mg(2+) is required as a cofactor. It depends on Mn(2+) as a cofactor. The cofactor is Zn(2+).

The enzyme catalyses a 5'-end NAD(+)-phospho-ribonucleoside in mRNA + H2O = a 5'-end phospho-adenosine-phospho-ribonucleoside in mRNA + beta-nicotinamide D-ribonucleotide + 2 H(+). It carries out the reaction NAD(+) + H2O = beta-nicotinamide D-ribonucleotide + AMP + 2 H(+). The catalysed reaction is NADH + H2O = reduced beta-nicotinamide D-ribonucleotide + AMP + 2 H(+). Its function is as follows. mRNA decapping enzyme that specifically removes the nicotinamide adenine dinucleotide (NAD) cap from a subset of mRNAs by hydrolyzing the diphosphate linkage to produce nicotinamide mononucleotide (NMN) and 5' monophosphate mRNA. The NAD-cap is present at the 5'-end of some mRNAs and stabilizes RNA against 5'-processing. Has preference for mRNAs with a 5'-end purine. Catalyzes the hydrolysis of a broad range of dinucleotide pyrophosphates. This Escherichia coli O157:H7 protein is NAD-capped RNA hydrolase NudC.